The sequence spans 601 residues: Glutathione-regulated potassium-efflux system protein KefB (601 aa).

13 helical membrane passes run 4 to 24 (ADLL…VPLA), 29 to 49 (IGAV…GLGF), 55 to 75 (EILH…GLEL), 87 to 107 (IFGV…GLLM), 111 to 131 (FLWQ…TAMA), 152 to 172 (VLLF…LLAG), 177 to 197 (HFDW…LIGG), 207 to 227 (FIAA…LVLS), 230 to 250 (LFMD…GVLL), 262 to 282 (AIDP…GMSL), 284 to 304 (LGVL…LVVI), 324 to 344 (MQFA…FSTA), and 356 to 376 (ALLL…MKGI). The region spanning 400-519 (KPQVIVVGFG…AGVTQFSRET (120 aa)) is the RCK N-terminal domain.

Belongs to the monovalent cation:proton antiporter 2 (CPA2) transporter (TC 2.A.37) family. KefB subfamily. As to quaternary structure, interacts with the regulatory subunit KefG.

The protein resides in the cell inner membrane. Functionally, pore-forming subunit of a potassium efflux system that confers protection against electrophiles. Catalyzes K(+)/H(+) antiport. In Salmonella dublin (strain CT_02021853), this protein is Glutathione-regulated potassium-efflux system protein KefB.